A 193-amino-acid polypeptide reads, in one-letter code: ATP synthase subunit b 1 (193 aa).

The interval 9–28 (QEADHTAGETHTETGVAEGG) is disordered. The segment covering 10-20 (EADHTAGETHT) has biased composition (basic and acidic residues). A helical transmembrane segment spans residues 40–59 (TYPSQLLWLAITFGLFYLFL).

Belongs to the ATPase B chain family. As to quaternary structure, F-type ATPases have 2 components, F(1) - the catalytic core - and F(0) - the membrane proton channel. F(1) has five subunits: alpha(3), beta(3), gamma(1), delta(1), epsilon(1). F(0) has three main subunits: a(1), b(2) and c(10-14). The alpha and beta chains form an alternating ring which encloses part of the gamma chain. F(1) is attached to F(0) by a central stalk formed by the gamma and epsilon chains, while a peripheral stalk is formed by the delta and b chains.

It is found in the cell inner membrane. In terms of biological role, f(1)F(0) ATP synthase produces ATP from ADP in the presence of a proton or sodium gradient. F-type ATPases consist of two structural domains, F(1) containing the extramembraneous catalytic core and F(0) containing the membrane proton channel, linked together by a central stalk and a peripheral stalk. During catalysis, ATP synthesis in the catalytic domain of F(1) is coupled via a rotary mechanism of the central stalk subunits to proton translocation. Its function is as follows. Component of the F(0) channel, it forms part of the peripheral stalk, linking F(1) to F(0). This Chelativorans sp. (strain BNC1) protein is ATP synthase subunit b 1.